Consider the following 1182-residue polypeptide: Intraflagellar transport protein 122 homolog (1182 aa).

WD repeat units follow at residues 10–50 (KAEQ…QPLK), 51–91 (GHKD…LKYT), 93–129 (NDSI…VSKH), 131–169 (SSSK…KVKI), 174–217 (GSLS…IGKD), 219–258 (PLNF…LGTV), 260–300 (EQNS…HGLY), and 453–492 (KQAT…LLFQ).

Component of the IFT complex A (IFT-A) complex. IFT-A complex is divided into a core subcomplex composed of IFT122:IFT140:WDR19 which is associated with TULP3 and a peripheral subcomplex composed of IFT43:WDR35:TTC21B. Interacts with IFT43:WDR35; the interaction connects the 2 IFT-A subcomplexes. Interacts with IFTAP; the interaction associates IFTAP with IFT-A complex.

Its subcellular location is the cell projection. The protein localises to the cilium. It localises to the cytoplasm. The protein resides in the cytoskeleton. It is found in the cilium basal body. Functionally, as a component of the IFT complex A (IFT-A), a complex required for retrograde ciliary transport and entry into cilia of G protein-coupled receptors (GPCRs), it is required in ciliogenesis and ciliary protein trafficking. Involved in cilia formation during neuronal patterning. Acts as a negative regulator of Shh signaling. Required to recruit TULP3 to primary cilia. This is Intraflagellar transport protein 122 homolog from Mus musculus (Mouse).